Consider the following 705-residue polypeptide: Pentatricopeptide repeat-containing protein At1g09410, mitochondrial (705 aa).

The N-terminal 11 residues, 1–11 (MKSQILLRRTY), are a transit peptide targeting the mitochondrion. 15 PPR repeats span residues 16 to 46 (PPPT…CDSK), 47 to 77 (SISS…MPDR), 78 to 112 (NIIS…NVVS), 113 to 139 (WTAL…MPEK), 140 to 170 (NKVS…IPDK), 171 to 205 (DNIA…SVIT), 206 to 232 (WTTM…MPEK), 233 to 267 (TEVS…PVIA), 268 to 294 (CNAM…MKER), 295 to 329 (NDAS…GVRP), 330 to 364 (TFPT…QFDV), 365 to 395 (DVYV…FPSK), 396 to 430 (DIIM…GSTK), 432 to 462 (NEVT…MESV), and 468 to 498 (ITAH…MTVE). A type E motif region spans residues 503–578 (VWGSLLGACR…SPGCSWTEVE (76 aa)). The type E(+) motif stretch occupies residues 579–610 (NKVHAFTRGGINSHPEQESILKILDELDGLLR). Residues 611 to 705 (EAGYNPDCSY…NGECSCKDYW (95 aa)) form a type DYW motif region.

The protein belongs to the PPR family. PCMP-H subfamily.

It localises to the mitochondrion. This chain is Pentatricopeptide repeat-containing protein At1g09410, mitochondrial (PCMP-H18), found in Arabidopsis thaliana (Mouse-ear cress).